Here is a 237-residue protein sequence, read N- to C-terminus: Neural retina-specific leucine zipper protein (237 aa).

Residues K20 and K24 each participate in a glycyl lysine isopeptide (Lys-Gly) (interchain with G-Cter in SUMO) cross-link. Residues 23–57 are disordered; that stretch reads VKREPSEGRPGPPTASLGSTPYSSVPPSPTFSEPG. Residues 30 to 93 are minimal transactivation domain (MTD); it reads GRPGPPTASL…AGEALGLSPE (64 aa). Positions 159–185 are basic motif; sequence RLKQRRRTLKNRGYAQACRSKRLQQRR. The 64-residue stretch at 159–222 folds into the bZIP domain; it reads RLKQRRRTLK…DLYKARCDRL (64 aa). The segment at 187–208 is leucine-zipper; that stretch reads LEAERARLAAQLDALRAEVARL.

The protein belongs to the bZIP family. Interacts with FIZ1; this interaction represses transactivation. Interacts (via the leucine-zipper domain) with CRX. Phosphorylated. Post-translationally, disumoylated at Lys-20. Sumoylation modulates the transcriptional activity of NRL on RHO and NR2E3 promoters, and is required for normal rod differentiation. As to expression, expressed in the brain and the retina. Expressed strongly in rod and cone cells (at protein level).

Its subcellular location is the cytoplasm. It localises to the nucleus. In terms of biological role, acts as a transcriptional activator which regulates the expression of several rod-specific genes, including RHO and PDE6B. Also functions as a transcriptional coactivator, stimulating transcription mediated by the transcription factor CRX and NR2E3. Binds to the rhodopsin promoter in a sequence-specific manner. The protein is Neural retina-specific leucine zipper protein (NRL) of Homo sapiens (Human).